Consider the following 499-residue polypeptide: Serine/threonine protein phosphatase 2A 57 kDa regulatory subunit B' beta isoform (499 aa).

Residues 1 to 13 (MFKKIMKGGHRKP) are compositionally biased toward basic residues. Positions 1–65 (MFKKIMKGGH…PVTATPPPPP (65 aa)) are disordered.

It belongs to the phosphatase 2A regulatory subunit B56 family. As to quaternary structure, PP2A consists of a common heteromeric enzyme, composed of a catalytic subunit (subunits C), a constant regulatory subunit (subunit A), and a variety of regulatory subunits such as subunits B (the R2/B/PR55/B55, R3/B''/PR72/PR130/PR59 and R5/B'/B56 families). Interacts with BZR1. Interacts with BRI1. Interacts with SRK2E/OST1. In terms of tissue distribution, expressed ubiquitously, higher levels in cotyledons and flowers.

It is found in the nucleus. It localises to the cytoplasm. In terms of biological role, the B regulatory subunit may modulate substrate selectivity and catalytic activity, and may also direct the localization of the catalytic enzyme to a particular subcellular compartment. Required for the formation of the PP2A holoenzyme that positively regulates brassinosteroid signaling by dephosphorylating and activating BZR1. The polypeptide is Serine/threonine protein phosphatase 2A 57 kDa regulatory subunit B' beta isoform (B'BETA) (Arabidopsis thaliana (Mouse-ear cress)).